We begin with the raw amino-acid sequence, 95 residues long: Putative septation protein SpoVG (95 aa).

It belongs to the SpoVG family.

Functionally, could be involved in septation. This is Putative septation protein SpoVG from Brevibacillus brevis (strain 47 / JCM 6285 / NBRC 100599).